The chain runs to 274 residues: NH(3)-dependent NAD(+) synthetase (274 aa).

Position 46-53 (Gly-46–Ser-53) interacts with ATP. Mg(2+) is bound at residue Asp-52. Residue Arg-140 participates in deamido-NAD(+) binding. ATP is bound at residue Thr-160. Residue Glu-165 coordinates Mg(2+). Deamido-NAD(+) contacts are provided by Lys-173 and Asp-180. ATP is bound by residues Lys-189 and Thr-211. His-260–Lys-261 is a binding site for deamido-NAD(+).

This sequence belongs to the NAD synthetase family. In terms of assembly, homodimer.

It carries out the reaction deamido-NAD(+) + NH4(+) + ATP = AMP + diphosphate + NAD(+) + H(+). The protein operates within cofactor biosynthesis; NAD(+) biosynthesis; NAD(+) from deamido-NAD(+) (ammonia route): step 1/1. In terms of biological role, catalyzes the ATP-dependent amidation of deamido-NAD to form NAD. Uses ammonia as a nitrogen source. The sequence is that of NH(3)-dependent NAD(+) synthetase from Streptococcus pneumoniae (strain 70585).